Here is a 103-residue protein sequence, read N- to C-terminus: Small ribosomal subunit protein uS10 (103 aa).

It belongs to the universal ribosomal protein uS10 family. Part of the 30S ribosomal subunit.

In terms of biological role, involved in the binding of tRNA to the ribosomes. This Shewanella denitrificans (strain OS217 / ATCC BAA-1090 / DSM 15013) protein is Small ribosomal subunit protein uS10.